Consider the following 206-residue polypeptide: Thymidylate kinase (206 aa).

10–17 (GIDGAGKS) is a binding site for ATP.

The protein belongs to the thymidylate kinase family.

The catalysed reaction is dTMP + ATP = dTDP + ADP. Its function is as follows. Phosphorylation of dTMP to form dTDP in both de novo and salvage pathways of dTTP synthesis. This Neisseria meningitidis serogroup A / serotype 4A (strain DSM 15465 / Z2491) protein is Thymidylate kinase (tmk).